The sequence spans 129 residues: MQLPSRGTDWIAQVLRLPRNAGRGLIWLYRHTLSPLVGYNCRHYPTCSMYGDEAIRKFGLWAGGWMTLARLLRCQPWGTSGIDLVPQTAPSRARWYLPWRYARWRGVNAPPPDVAEPCGCGSHSQLTPH.

It belongs to the UPF0161 family.

Its subcellular location is the cell inner membrane. Functionally, could be involved in insertion of integral membrane proteins into the membrane. The protein is Putative membrane protein insertion efficiency factor of Rhodopseudomonas palustris (strain ATCC BAA-98 / CGA009).